The following is a 210-amino-acid chain: NAD(P)H-quinone oxidoreductase subunit I (210 aa).

2 4Fe-4S ferredoxin-type domains span residues Gly-54–Ala-83 and Tyr-94–Asp-123. 8 residues coordinate [4Fe-4S] cluster: Cys-63, Cys-66, Cys-69, Cys-73, Cys-103, Cys-106, Cys-109, and Cys-113.

The protein belongs to the complex I 23 kDa subunit family. NDH-1 is composed of at least 11 different subunits. Requires [4Fe-4S] cluster as cofactor.

It localises to the cellular thylakoid membrane. The enzyme catalyses a plastoquinone + NADH + (n+1) H(+)(in) = a plastoquinol + NAD(+) + n H(+)(out). It carries out the reaction a plastoquinone + NADPH + (n+1) H(+)(in) = a plastoquinol + NADP(+) + n H(+)(out). In terms of biological role, NDH-1 shuttles electrons from an unknown electron donor, via FMN and iron-sulfur (Fe-S) centers, to quinones in the respiratory and/or the photosynthetic chain. The immediate electron acceptor for the enzyme in this species is believed to be plastoquinone. Couples the redox reaction to proton translocation, and thus conserves the redox energy in a proton gradient. This Synechococcus sp. (strain JA-2-3B'a(2-13)) (Cyanobacteria bacterium Yellowstone B-Prime) protein is NAD(P)H-quinone oxidoreductase subunit I.